The chain runs to 406 residues: Serine/threonine transporter SstT (406 aa).

A run of 9 helical transmembrane segments spans residues 15-35 (LVLQ…VSPS), 47-67 (FVGA…AASI), 81-101 (IIAM…VLSF), 140-160 (ALMS…GLAL), 191-211 (FGIF…ALAG), 215-235 (LLVV…PAMV), 289-309 (IPLG…TLTL), 315-335 (MGIE…AVSA), and 362-382 (IAMQ…SAET).

This sequence belongs to the dicarboxylate/amino acid:cation symporter (DAACS) (TC 2.A.23) family.

It localises to the cell inner membrane. The catalysed reaction is L-serine(in) + Na(+)(in) = L-serine(out) + Na(+)(out). It carries out the reaction L-threonine(in) + Na(+)(in) = L-threonine(out) + Na(+)(out). Involved in the import of serine and threonine into the cell, with the concomitant import of sodium (symport system). This is Serine/threonine transporter SstT from Vibrio vulnificus (strain CMCP6).